The chain runs to 168 residues: uncharacterized protein (168 aa).

Helical transmembrane passes span 15-33, 41-57, 73-93, 108-128, and 129-149; these read YLTV…LAVL, LSLT…ASSL, WIGL…GALL, VPLL…WVLN, and NLIA…VLAI.

It is found in the cell membrane. This is an uncharacterized protein from Haemophilus influenzae (strain ATCC 51907 / DSM 11121 / KW20 / Rd).